We begin with the raw amino-acid sequence, 376 residues long: GTPase Obg (376 aa).

In terms of domain architecture, Obg spans 2–161 (ASFVDEVLIR…RVVHVELRIV (160 aa)). The OBG-type G domain maps to 162-328 (ADVGFVGLPN…LQEAFVRLSD (167 aa)). GTP contacts are provided by residues 168 to 175 (GLPNAGKS), 193 to 197 (FTTRI), 215 to 218 (DVPG), 282 to 285 (TKLD), and 309 to 311 (SVH). Residues Ser-175 and Thr-195 each coordinate Mg(2+).

Belongs to the TRAFAC class OBG-HflX-like GTPase superfamily. OBG GTPase family. In terms of assembly, monomer. Mg(2+) is required as a cofactor.

It is found in the cytoplasm. Its function is as follows. An essential GTPase which binds GTP, GDP and possibly (p)ppGpp with moderate affinity, with high nucleotide exchange rates and a fairly low GTP hydrolysis rate. Plays a role in control of the cell cycle, stress response, ribosome biogenesis and in those bacteria that undergo differentiation, in morphogenesis control. The sequence is that of GTPase Obg from Treponema pallidum (strain Nichols).